The chain runs to 348 residues: MAIVSSSSGRKPPRRPEALMDPQQAPEEVVSRPEDKLRPQRLDDYIGQSELKQVLGIAVQAALGRGDALDHVLLYGPPGLGKTTMAMVLAEEMGVHCKVTSAPALERPRDIVGLLVNLQPRDLLFIDEIHRLSRVAEELLYPAMEDRRLDLTVGKGSTARTRSLDLPPFTLVGATTRAGSLSSPLRDRFGLIQRLEFYGQGDLEAIVERTAGLIGVTLTPQARSSIAASCRGTPRIANRLLRRVRDVASVRGGGGGAINQALVGEALSLHRVDHRGLDASDRRLLQLLIDHHGGGPVGLETLAAALGDDPVTLETVVEPFLMQQGLLMRTPRGRMVTDAARSHLAEAA.

A compositionally biased stretch (low complexity) spans 1 to 10 (MAIVSSSSGR). The interval 1–37 (MAIVSSSSGRKPPRRPEALMDPQQAPEEVVSRPEDKL) is disordered. The interval 13-198 (PRRPEALMDP…FGLIQRLEFY (186 aa)) is large ATPase domain (RuvB-L). 9 residues coordinate ATP: leucine 37, arginine 38, glycine 79, lysine 82, threonine 83, threonine 84, arginine 188, tyrosine 198, and arginine 235. Threonine 83 provides a ligand contact to Mg(2+). Positions 199–271 (GQGDLEAIVE…LVGEALSLHR (73 aa)) are small ATPAse domain (RuvB-S). A head domain (RuvB-H) region spans residues 274–348 (HRGLDASDRR…AARSHLAEAA (75 aa)). DNA-binding residues include arginine 329 and arginine 334.

This sequence belongs to the RuvB family. In terms of assembly, homohexamer. Forms an RuvA(8)-RuvB(12)-Holliday junction (HJ) complex. HJ DNA is sandwiched between 2 RuvA tetramers; dsDNA enters through RuvA and exits via RuvB. An RuvB hexamer assembles on each DNA strand where it exits the tetramer. Each RuvB hexamer is contacted by two RuvA subunits (via domain III) on 2 adjacent RuvB subunits; this complex drives branch migration. In the full resolvosome a probable DNA-RuvA(4)-RuvB(12)-RuvC(2) complex forms which resolves the HJ.

The protein resides in the cytoplasm. It catalyses the reaction ATP + H2O = ADP + phosphate + H(+). In terms of biological role, the RuvA-RuvB-RuvC complex processes Holliday junction (HJ) DNA during genetic recombination and DNA repair, while the RuvA-RuvB complex plays an important role in the rescue of blocked DNA replication forks via replication fork reversal (RFR). RuvA specifically binds to HJ cruciform DNA, conferring on it an open structure. The RuvB hexamer acts as an ATP-dependent pump, pulling dsDNA into and through the RuvAB complex. RuvB forms 2 homohexamers on either side of HJ DNA bound by 1 or 2 RuvA tetramers; 4 subunits per hexamer contact DNA at a time. Coordinated motions by a converter formed by DNA-disengaged RuvB subunits stimulates ATP hydrolysis and nucleotide exchange. Immobilization of the converter enables RuvB to convert the ATP-contained energy into a lever motion, pulling 2 nucleotides of DNA out of the RuvA tetramer per ATP hydrolyzed, thus driving DNA branch migration. The RuvB motors rotate together with the DNA substrate, which together with the progressing nucleotide cycle form the mechanistic basis for DNA recombination by continuous HJ branch migration. Branch migration allows RuvC to scan DNA until it finds its consensus sequence, where it cleaves and resolves cruciform DNA. In Synechococcus sp. (strain CC9605), this protein is Holliday junction branch migration complex subunit RuvB.